A 215-amino-acid polypeptide reads, in one-letter code: Nucleoside triphosphate pyrophosphatase (215 aa).

Aspartate 77 serves as the catalytic Proton acceptor.

This sequence belongs to the Maf family. A divalent metal cation is required as a cofactor.

It is found in the cytoplasm. It catalyses the reaction a ribonucleoside 5'-triphosphate + H2O = a ribonucleoside 5'-phosphate + diphosphate + H(+). The enzyme catalyses a 2'-deoxyribonucleoside 5'-triphosphate + H2O = a 2'-deoxyribonucleoside 5'-phosphate + diphosphate + H(+). Functionally, nucleoside triphosphate pyrophosphatase. May have a dual role in cell division arrest and in preventing the incorporation of modified nucleotides into cellular nucleic acids. This chain is Nucleoside triphosphate pyrophosphatase, found in Rickettsia peacockii (strain Rustic).